We begin with the raw amino-acid sequence, 217 residues long: Non-structural protein NS3 (217 aa).

The protein belongs to the orbivirus NS3 family.

Functionally, may play a role in the release of virions from infected cells. This chain is Non-structural protein NS3 (Segment-10), found in African horse sickness virus (AHSV).